Reading from the N-terminus, the 279-residue chain is Oxygen-dependent coproporphyrinogen-III oxidase (279 aa).

A substrate-binding site is contributed by serine 102. Residues histidine 106 and histidine 116 each coordinate a divalent metal cation. Catalysis depends on histidine 116, which acts as the Proton donor. Residue 118 to 120 (NTR) coordinates substrate. Residues histidine 149 and histidine 179 each contribute to the a divalent metal cation site. Positions 244–279 (YVEFNLLYDRGTKFGLMTDGNVEAILMSLPPVVKFN) are important for dimerization.

This sequence belongs to the aerobic coproporphyrinogen-III oxidase family. Homodimer. Requires a divalent metal cation as cofactor.

The protein localises to the cytoplasm. The catalysed reaction is coproporphyrinogen III + O2 + 2 H(+) = protoporphyrinogen IX + 2 CO2 + 2 H2O. Its pathway is porphyrin-containing compound metabolism; protoporphyrin-IX biosynthesis; protoporphyrinogen-IX from coproporphyrinogen-III (O2 route): step 1/1. Its function is as follows. Involved in the heme biosynthesis. Catalyzes the aerobic oxidative decarboxylation of propionate groups of rings A and B of coproporphyrinogen-III to yield the vinyl groups in protoporphyrinogen-IX. This Rickettsia prowazekii (strain Madrid E) protein is Oxygen-dependent coproporphyrinogen-III oxidase.